The primary structure comprises 589 residues: Serine/threonine-protein phosphatase 2A 65 kDa regulatory subunit A alpha isoform (589 aa).

Residue alanine 2 is modified to N-acetylalanine. HEAT repeat units follow at residues 8–46 (DSLY…GVER), 47–84 (TRSE…GGPE), 85–123 (YVHC…SPSD), 124–161 (LEAH…VSSA), 162–200 (VKAE…ELDN), 201–239 (VKSE…PQED), 240–278 (LEAL…GPEI), 279–321 (TKTD…RENV), 322–360 (IMTQ…GKDS), 361–399 (TIEH…GIRQ), 400–438 (LSQS…GVEF), 439–477 (FDEK…GKEW), 478–516 (AHAT…GQDI), 517–555 (TTKH…DNST), and 556–589 (LQSE…LSLA). The tract at residues 8–399 (DSLYPIAVLI…CVNEVIGIRQ (392 aa)) is PP2A subunit B binding. The polyoma small and medium T antigens Binding stretch occupies residues 47 to 321 (TRSELLPFLT…NLSADCRENV (275 aa)). The tract at residues 85 to 239 (YVHCLLPPLE…NIAQLLPQED (155 aa)) is SV40 small T antigen binding. Position 280 is an N6-acetyllysine (lysine 280). Residues 400–589 (LSQSLLPAIV…QEALTVLSLA (190 aa)) are PP2A subunit C binding.

This sequence belongs to the phosphatase 2A regulatory subunit A family. As to quaternary structure, PP2A consists of a common heterodimeric core enzyme, composed of PPP2CA a 36 kDa catalytic subunit (subunit C) and PPP2R1A a 65 kDa constant regulatory subunit (PR65 or subunit A), that associates with a variety of regulatory subunits. Proteins that associate with the core dimer include three families of regulatory subunits B (the R2/B/PR55/B55, R3/B''/PR72/PR130/PR59 and R5/B'/B56 families), the 48 kDa variable regulatory subunit, viral proteins, and cell signaling molecules. Found in a complex with at least ARL2, PPP2CB, PPP2R1A, PPP2R2A, PPP2R5E and TBCD. Interacts with the PP2A C catalytic subunit PPP2CA. Interacts with the PP2A B subunit PPP2R2A. Interacts with the PP2A B subunit PPP2R5D. Interacts with FOXO1; the interaction dephosphorylates FOXO1 on AKT-mediated phosphorylation sites. Interacts with IPO9. Interacts with TP53 and SGO1. Interacts with PLA2G16; this interaction might decrease PP2A activity. Interacts with CTTNBP2NL. Interacts with GNA12; the interaction promotes protein phosphatase 2A activation causing dephosphorylation of MAPT. Interacts with CIP2A; this interaction stabilizes CIP2A. Interacts with PABIR1/FAM122A. Interacts with ADCY8; antagonizes interaction between ADCY8 and calmodulin. Interacts with CRTC3 (when phosphorylated at 'Ser-391'). Interacts with SPRY2. Part of the core of STRIPAK complexes composed of PP2A catalytic and scaffolding subunits, the striatins (PP2A regulatory subunits), the striatin-associated proteins MOB4, STRIP1 and STRIP2, PDCD10 and members of the STE20 kinases, such as STK24 and STK26. Component of the Integrator-PP2A (INTAC) complex, composed of the Integrator core complex and protein phosphatase 2A subunits PPP2CA and PPP2R1A.

The protein localises to the cytoplasm. The protein resides in the nucleus. It localises to the chromosome. Its subcellular location is the centromere. It is found in the lateral cell membrane. The protein localises to the cell projection. The protein resides in the dendrite. In terms of biological role, the PR65 subunit of protein phosphatase 2A serves as a scaffolding molecule to coordinate the assembly of the catalytic subunit and a variable regulatory B subunit. Upon interaction with GNA12 promotes dephosphorylation of microtubule associated protein TAU/MAPT. Required for proper chromosome segregation and for centromeric localization of SGO1 in mitosis. Together with RACK1 adapter, mediates dephosphorylation of AKT1 at 'Ser-473', preventing AKT1 activation and AKT-mTOR signaling pathway. Dephosphorylation of AKT1 is essential for regulatory T-cells (Treg) homeostasis and stability. Part of the striatin-interacting phosphatase and kinase (STRIPAK) complexes. STRIPAK complexes have critical roles in protein (de)phosphorylation and are regulators of multiple signaling pathways including Hippo, MAPK, nuclear receptor and cytoskeleton remodeling. Different types of STRIPAK complexes are involved in a variety of biological processes such as cell growth, differentiation, apoptosis, metabolism and immune regulation. Key mediator of a quality checkpoint during transcription elongation as part of the Integrator-PP2A (INTAC) complex. The INTAC complex drives premature transcription termination of transcripts that are unfavorably configured for transcriptional elongation: within the INTAC complex, acts as a scaffolding subunit for PPP2CA, which catalyzes dephosphorylation of the C-terminal domain (CTD) of Pol II subunit POLR2A/RPB1 and SUPT5H/SPT5, thereby preventing transcriptional elongation. Regulates the recruitment of the SKA complex to kinetochores. In Bos taurus (Bovine), this protein is Serine/threonine-protein phosphatase 2A 65 kDa regulatory subunit A alpha isoform (PPP2R1A).